The primary structure comprises 390 residues: Putative 2-isopropylmalate synthase (390 aa).

In terms of domain architecture, Pyruvate carboxyltransferase spans 5–267 (IIIFDTTLRD…KTNIKYQEIY (263 aa)). 4 residues coordinate Mn(2+): D14, H202, H204, and N238.

It belongs to the alpha-IPM synthase/homocitrate synthase family. LeuA type 1 subfamily. Homodimer. The cofactor is Mn(2+).

It is found in the cytoplasm. The catalysed reaction is 3-methyl-2-oxobutanoate + acetyl-CoA + H2O = (2S)-2-isopropylmalate + CoA + H(+). The protein operates within amino-acid biosynthesis; L-leucine biosynthesis; L-leucine from 3-methyl-2-oxobutanoate: step 1/4. Its function is as follows. Catalyzes the condensation of the acetyl group of acetyl-CoA with 3-methyl-2-oxobutanoate (2-ketoisovalerate) to form 3-carboxy-3-hydroxy-4-methylpentanoate (2-isopropylmalate). In Buchnera aphidicola subsp. Baizongia pistaciae (strain Bp), this protein is Putative 2-isopropylmalate synthase.